A 148-amino-acid polypeptide reads, in one-letter code: Protein H2A.6 (148 aa).

The segment at 120 to 148 (GAAEKESTKSPKKKAATKSPKKKTAATKE) is disordered. 2 short sequence motifs (SPKK motif) span residues 129–132 (SPKK) and 138–141 (SPKK). Basic residues predominate over residues 129–148 (SPKKKAATKSPKKKTAATKE).

Belongs to the histone H2A family. In terms of assembly, the nucleosome is a histone octamer containing two molecules each of H2A, H2B, H3 and H4 assembled in one H3-H4 heterotetramer and two H2A-H2B heterodimers. The octamer wraps approximately 147 bp of DNA. As to expression, abundant in meristematic tissues.

Its subcellular location is the nucleus. It is found in the chromosome. Core component of nucleosome. Nucleosomes wrap and compact DNA into chromatin, limiting DNA accessibility to the cellular machineries which require DNA as a template. Histones thereby play a central role in transcription regulation, DNA repair, DNA replication and chromosomal stability. DNA accessibility is regulated via a complex set of post-translational modifications of histones, also called histone code, and nucleosome remodeling. In Triticum aestivum (Wheat), this protein is Protein H2A.6 (H2A-3).